Here is a 131-residue protein sequence, read N- to C-terminus: Structural protein ORF131 (131 aa).

It belongs to the viral ORF131/RIP family.

It localises to the virion. In Acidianus convivator (ATV), this protein is Structural protein ORF131.